Reading from the N-terminus, the 418-residue chain is Enolase 1 (418 aa).

Q162 provides a ligand contact to (2R)-2-phosphoglycerate. Catalysis depends on E204, which acts as the Proton donor. Mg(2+) is bound by residues D241, E285, and D312. (2R)-2-phosphoglycerate contacts are provided by K337, R366, S367, and K388. The Proton acceptor role is filled by K337.

The protein belongs to the enolase family. Mg(2+) is required as a cofactor.

It is found in the cytoplasm. The protein localises to the secreted. Its subcellular location is the cell surface. It catalyses the reaction (2R)-2-phosphoglycerate = phosphoenolpyruvate + H2O. It participates in carbohydrate degradation; glycolysis; pyruvate from D-glyceraldehyde 3-phosphate: step 4/5. Catalyzes the reversible conversion of 2-phosphoglycerate (2-PG) into phosphoenolpyruvate (PEP). It is essential for the degradation of carbohydrates via glycolysis. This is Enolase 1 from Lactococcus lactis subsp. cremoris (strain SK11).